The chain runs to 216 residues: MKWSEVFHDITTRHDFQAMHDFLEKEYTTQIVYPDKKNIYQAFDLTPFEDIKVVILGQDPYHGPNQAHGLAFSVQPHAKFPPSLRNMYQELENDIGCHRTSPHLQDWAREGVLLLNTVLTVRQGEAHSHRNIGWETFTDEIIQAVSNYREHVVFILWGRPAQQKERFIDTSKHLIIKSPHPSPLSAFRGFFGSKPYSTTNNYLKSKGKTPVQWCES.

The active-site Proton acceptor is the Asp-59.

Belongs to the uracil-DNA glycosylase (UDG) superfamily. UNG family.

It is found in the cytoplasm. The catalysed reaction is Hydrolyzes single-stranded DNA or mismatched double-stranded DNA and polynucleotides, releasing free uracil.. Excises uracil residues from the DNA which can arise as a result of misincorporation of dUMP residues by DNA polymerase or due to deamination of cytosine. This chain is Uracil-DNA glycosylase, found in Staphylococcus epidermidis (strain ATCC 35984 / DSM 28319 / BCRC 17069 / CCUG 31568 / BM 3577 / RP62A).